The primary structure comprises 557 residues: CTP synthase (557 aa).

An amidoligase domain region spans residues 1–270 (MTKYVFVTGG…DAIICEELKL (270 aa)). S13 contributes to the CTP binding site. Position 13 (S13) interacts with UTP. Residues 14–19 (SLGKGI) and D71 contribute to the ATP site. The Mg(2+) site is built by D71 and E144. CTP contacts are provided by residues 151–153 (DIE), 191–196 (KTKPTQ), and K227. Residues 191 to 196 (KTKPTQ) and K227 each bind UTP. Positions 295–547 (TIGMVGKYVD…VEAALAHHEA (253 aa)) constitute a Glutamine amidotransferase type-1 domain. Position 356 (G356) interacts with L-glutamine. C383 acts as the Nucleophile; for glutamine hydrolysis in catalysis. Residues 384 to 387 (LGMQ), E407, and R473 contribute to the L-glutamine site. Residues H520 and E522 contribute to the active site.

Belongs to the CTP synthase family. Homotetramer.

It carries out the reaction UTP + L-glutamine + ATP + H2O = CTP + L-glutamate + ADP + phosphate + 2 H(+). The catalysed reaction is L-glutamine + H2O = L-glutamate + NH4(+). It catalyses the reaction UTP + NH4(+) + ATP = CTP + ADP + phosphate + 2 H(+). Its pathway is pyrimidine metabolism; CTP biosynthesis via de novo pathway; CTP from UDP: step 2/2. Allosterically activated by GTP, when glutamine is the substrate; GTP has no effect on the reaction when ammonia is the substrate. The allosteric effector GTP functions by stabilizing the protein conformation that binds the tetrahedral intermediate(s) formed during glutamine hydrolysis. Inhibited by the product CTP, via allosteric rather than competitive inhibition. Functionally, catalyzes the ATP-dependent amination of UTP to CTP with either L-glutamine or ammonia as the source of nitrogen. Regulates intracellular CTP levels through interactions with the four ribonucleotide triphosphates. The chain is CTP synthase from Paraburkholderia phytofirmans (strain DSM 17436 / LMG 22146 / PsJN) (Burkholderia phytofirmans).